We begin with the raw amino-acid sequence, 1294 residues long: Disease resistance protein L6 (1294 aa).

A signal peptide spans 1–29 (MSYLREVATAVALLLPFILLNKFWRPNSK). The tract at residues 34–54 (NDDDDSTSEVDAISDSTNPSG) is disordered. A TIR domain is found at 59–221 (VEYEVFLSFR…AIADKVSADI (163 aa)). NAD(+)-binding positions include 68–73 (RGPDTR) and glycine 101. Glutamate 135 is an active-site residue. Positions 241 to 480 (DDHITAVLEK…VYDRLKISYD (240 aa)) constitute an NB-ARC domain. 11 LRR repeats span residues 246 to 268 (AVLE…GMGG), 468 to 492 (LDEV…IFLD), 604 to 625 (LSEL…NNLL), 626 to 650 (PNLK…NYTM), 904 to 928 (LENL…GLQG), 1012 to 1039 (FPML…SLEE), 1063 to 1085 (LQKL…LEEL), 1086 to 1109 (KSLQ…KLKE), 1179 to 1203 (LEEL…SFLS), 1205 to 1229 (LQKL…ELKS), and 1254 to 1278 (LKNL…ALKT).

Belongs to the disease resistance TIR-NB-LRR family. In terms of assembly, homooligomer; homooligomerization is required for activity.

It catalyses the reaction NAD(+) + H2O = ADP-D-ribose + nicotinamide + H(+). The catalysed reaction is NADP(+) + H2O = ADP-D-ribose 2'-phosphate + nicotinamide + H(+). The enzyme catalyses NAD(+) = 2'cADPR + nicotinamide + H(+). Functionally, TIR-NB-LRR receptor-like protein that confers resistance to the flax rust phytopathogenic fungus (M.lini). An NAD(+) hydrolase (NADase): in response to activation, catalyzes cleavage of NAD(+) into ADP-D-ribose (ADPR) and nicotinamide; NAD(+) cleavage triggering a defense system that promotes cell death. Also able to hydrolyze NADP(+), but not other NAD(+)-related molecules. Makes small amounts of 2' cyclic ADPR (2'cADPR). This is Disease resistance protein L6 from Linum usitatissimum (Flax).